Consider the following 136-residue polypeptide: ATP synthase epsilon chain, chloroplastic (136 aa).

This sequence belongs to the ATPase epsilon chain family. As to quaternary structure, F-type ATPases have 2 components, CF(1) - the catalytic core - and CF(0) - the membrane proton channel. CF(1) has five subunits: alpha(3), beta(3), gamma(1), delta(1), epsilon(1). CF(0) has three main subunits: a, b and c.

Its subcellular location is the plastid. It is found in the chloroplast thylakoid membrane. Produces ATP from ADP in the presence of a proton gradient across the membrane. The polypeptide is ATP synthase epsilon chain, chloroplastic (Cucumis sativus (Cucumber)).